The primary structure comprises 394 residues: Elongation factor Tu 2 (394 aa).

The tr-type G domain occupies 10–204 (KPHVNVGTIG…ALDTYIPEPA (195 aa)). The segment at 19-26 (GHVDHGKT) is G1. 19 to 26 (GHVDHGKT) provides a ligand contact to GTP. T26 contributes to the Mg(2+) binding site. Positions 60 to 64 (GITIN) are G2. Residues 81-84 (DCPG) are G3. GTP-binding positions include 81–85 (DCPGH) and 136–139 (NKCD). Positions 136-139 (NKCD) are G4. Residues 174–176 (SAL) form a G5 region.

Belongs to the TRAFAC class translation factor GTPase superfamily. Classic translation factor GTPase family. EF-Tu/EF-1A subfamily. In terms of assembly, monomer.

The protein resides in the cytoplasm. The catalysed reaction is GTP + H2O = GDP + phosphate + H(+). Functionally, GTP hydrolase that promotes the GTP-dependent binding of aminoacyl-tRNA to the A-site of ribosomes during protein biosynthesis. In Shewanella frigidimarina (strain NCIMB 400), this protein is Elongation factor Tu 2.